A 345-amino-acid chain; its full sequence is L-threonine 3-dehydrogenase (345 aa).

Residue Cys42 coordinates Zn(2+). Catalysis depends on charge relay system residues Thr44 and His47. Residues His67, Glu68, Cys97, Cys100, Cys103, and Cys111 each coordinate Zn(2+). Residues Ile179, Asp199, Arg204, 266 to 268, and 290 to 291 contribute to the NAD(+) site; these read LGI and IY.

This sequence belongs to the zinc-containing alcohol dehydrogenase family. As to quaternary structure, homotetramer. Requires Zn(2+) as cofactor.

The protein localises to the cytoplasm. The enzyme catalyses L-threonine + NAD(+) = (2S)-2-amino-3-oxobutanoate + NADH + H(+). Its pathway is amino-acid degradation; L-threonine degradation via oxydo-reductase pathway; glycine from L-threonine: step 1/2. Its function is as follows. Catalyzes the NAD(+)-dependent oxidation of L-threonine to 2-amino-3-ketobutyrate. This chain is L-threonine 3-dehydrogenase, found in Rhizobium etli (strain CIAT 652).